Reading from the N-terminus, the 39-residue chain is Large ribosomal subunit protein bL36 (39 aa).

It belongs to the bacterial ribosomal protein bL36 family.

The chain is Large ribosomal subunit protein bL36 from Pediococcus pentosaceus (strain ATCC 25745 / CCUG 21536 / LMG 10740 / 183-1w).